Reading from the N-terminus, the 269-residue chain is MASEFKKKLFWRAVVAEFLAMTLFVFISIGSALGFKYPVGNNQTAVQDNVKVSLAFGLSIATLAQSVGHISGAHLNPAVTLGLLLSCQISIFRALMYIIAQCVGAIVATAILSGITSSLPGNSLGRNDLADGVNSGQGLGIEIIGTLQLVLCVLATTDRRRRDLGGSAPLAIGLSVALGHLLAIDYTGCGINPARSFGSAVITHNFSNHWIFWVGPFIGGALAVLIYDFILAPRSSDFTDRVKVWTSGQVEEYDLDADDINSRVEMKPK.

Residues 1-11 are Cytoplasmic-facing; that stretch reads MASEFKKKLFW. The chain crosses the membrane as a helical span at residues 12–29; that stretch reads RAVVAEFLAMTLFVFISI. Residues 30 to 46 lie on the Extracellular side of the membrane; it reads GSALGFKYPVGNNQTAV. The N-linked (GlcNAc...) asparagine glycan is linked to asparagine 42. Residues 47–65 traverse the membrane as a helical segment; that stretch reads QDNVKVSLAFGLSIATLAQ. Topologically, residues 66 to 68 are cytoplasmic; that stretch reads SVG. Residues 69–82 lie within the membrane without spanning it; it reads HISGAHLNPAVTLG. Positions 76-78 match the NPA 1 motif; sequence NPA. The Cytoplasmic segment spans residues 83–90; the sequence is LLLSCQIS. Residues 91–109 traverse the membrane as a helical segment; that stretch reads IFRALMYIIAQCVGAIVAT. At 110 to 133 the chain is on the extracellular side; it reads AILSGITSSLPGNSLGRNDLADGV. A helical membrane pass occupies residues 134 to 153; the sequence is NSGQGLGIEIIGTLQLVLCV. Over 154 to 163 the chain is Cytoplasmic; it reads LATTDRRRRD. Residues 164 to 181 traverse the membrane as a helical segment; the sequence is LGGSAPLAIGLSVALGHL. Over 182–186 the chain is Extracellular; the sequence is LAIDY. The stretch at 187 to 199 is an intramembrane region; sequence TGCGINPARSFGS. The NPA 2 motif lies at 192 to 194; the sequence is NPA. Residues 200–206 are Extracellular-facing; it reads AVITHNF. N-linked (GlcNAc...) asparagine glycosylation is present at asparagine 205. The helical transmembrane segment at 207-224 threads the bilayer; that stretch reads SNHWIFWVGPFIGGALAV. At 225–269 the chain is on the cytoplasmic side; the sequence is LIYDFILAPRSSDFTDRVKVWTSGQVEEYDLDADDINSRVEMKPK. Serine 247 is subject to Phosphoserine. Tyrosine 253 is subject to Phosphotyrosine. Phosphoserine is present on serine 262.

This sequence belongs to the MIP/aquaporin (TC 1.A.8) family. As to quaternary structure, homotetramer; each monomer provides an independent water pore. Component of the ankyrin-1 complex in the erythrocyte, composed of ANK1, RHCE, RHAG, SLC4A1, EPB42, GYPA, GYPB and AQP1. Interacts with EPHB2; involved in endolymph production in the inner ear. Identified in a complex with STOM. Interacts (via the N-terminal) with ANK1 (via ANK 1-5 repeats). Interacts (via the C-terminal) with EPB42.

The protein resides in the cell membrane. It carries out the reaction H2O(in) = H2O(out). The enzyme catalyses nitric oxide(out) = nitric oxide(in). It catalyses the reaction CO2(out) = CO2(in). The catalysed reaction is glycerol(in) = glycerol(out). It carries out the reaction H2O2(out) = H2O2(in). The enzyme catalyses K(+)(in) = K(+)(out). It catalyses the reaction Na(+)(in) = Na(+)(out). Forms a water channel that facilitates the transport of water across cell membranes, playing a crucial role in water homeostasis in various tissues. Could also be permeable to small solutes including hydrogen peroxide, glycerol and gases such as amonnia (NH3), nitric oxide (NO) and carbon dioxide (CO2). Recruited to the ankyrin-1 complex, a multiprotein complex of the erythrocyte membrane, it could be part of a CO2 metabolon, linking facilitated diffusion of CO2 across the membrane, anion exchange of Cl(-)/HCO3(-) and interconversion of dissolved CO2 and carbonic acid in the cytosol. In vitro, it shows non-selective gated cation channel activity and may be permeable to cations like K(+) and Na(+) in vivo. The polypeptide is Aquaporin-1 (Pongo abelii (Sumatran orangutan)).